The following is a 183-amino-acid chain: Transcription factor 15 (183 aa).

The interval 24–46 (DEENRSESDTSDQSYGCCEGAEA) is disordered. One can recognise a bHLH domain in the interval 61-113 (KQRQAANARERDRTQSVNTAFTALRTLIPTEPVDRKLSKIETLRLASSYIAHL).

As to quaternary structure, heterodimer; efficient DNA binding requires dimerization with another bHLH protein.

The protein resides in the nucleus. Functionally, early transcription factor that plays a key role in somitogenesis, paraxial mesoderm development and regulation of stem cell pluripotency. Essential for the mesenchymal to epithelial transition associated with somite formation. Required for somite morphogenesis, thereby regulating patterning of the axial skeleton and skeletal muscles. Also plays a key role in regulation of stem cell pluripotency. Promotes pluripotency exit of embryonic stem cells (ESCs) by priming ESCs for differentiation. Acts as a key regulator of self-renewal of hematopoietic stem cells (HSCs) by mediating HSCs quiescence and long-term self-renewal. Acts by forming a heterodimer with another helix-loop-helix (bHLH) protein, that binds DNA on E-box motifs (5'-CANNTG-3') and activates transcription of target genes. This chain is Transcription factor 15 (TCF15), found in Gallus gallus (Chicken).